We begin with the raw amino-acid sequence, 547 residues long: CAP-Gly domain-containing linker protein 3 (547 aa).

A disordered region spans residues 1-49 (MTKTDPAPMAPPPRGEEEEEEEEDEPVPEAPSPTQERRQKPVVHPSAPA). The span at 16–27 (EEEEEEEEDEPV) shows a compositional bias: acidic residues. 3 ANK repeats span residues 117–155 (TDMTLLHYACKAGAHGVGDPAAAVRLSQQLLALGADVTL), 160–189 (TNMNALHYAAYFDVPDLVRVLLKGARPRVV), and 197–226 (NHGSALHIAASSLCLGAAKCLLEHGANPAL). The CAP-Gly 1 domain occupies 314–356 (GTTEFASGQWVGVELDEPEGKNDGSVGGVRYFICPPKQGLFAS). Positions 365–413 (DAPPSSVTSTPRTPRMDFSRVTGKGRREHKGKKKTPSSPSLGSLQQRDR) are disordered. The segment covering 367–377 (PPSSVTSTPRT) has biased composition (low complexity). Residue T374 is modified to Phosphothreonine. The span at 387–399 (GKGRREHKGKKKT) shows a compositional bias: basic residues. The span at 400-409 (PSSPSLGSLQ) shows a compositional bias: polar residues. S401 bears the Phosphoserine mark. The region spanning 436 to 478 (GKTDFAPGYWYGIELDQPTGKHDGSVFGVRYFTCPPRHGVFAP) is the CAP-Gly 2 domain. Residues 488–547 (STDSPGDSVGAKKVHQVTMTQPKRTFTTVRTPKDIASENSISRLLFCCWFPWMLRAEMQS) are goLD. Residues C534 and C535 are each lipidated (S-palmitoyl cysteine).

Homodimer. Interacts with AKT1 and AKT2; when AKT1 and AKT2 are phosphorylated and activated, affinity is higher for AKT2. Interacts with ZDHHC13 (via ANK repeats). Interacts with ZDHHC17 (via ANK repeats). Post-translationally, palmitoylation by ZDHHC17 regulates association with the plasma membrane.

The protein resides in the cell membrane. Its subcellular location is the cytoplasm. It localises to the golgi apparatus. The protein localises to the golgi stack. In terms of biological role, functions as a cytoplasmic linker protein. Involved in TGN-endosome dynamics. May modulate the cellular compartmentalization of AKT kinase family and promote its cell membrane localization, thereby playing a role in glucose transport in adipocytes. The sequence is that of CAP-Gly domain-containing linker protein 3 (CLIP3) from Pongo abelii (Sumatran orangutan).